A 217-amino-acid chain; its full sequence is Probable transaldolase (217 aa).

K83 (schiff-base intermediate with substrate) is an active-site residue.

The protein belongs to the transaldolase family. Type 3B subfamily.

Its subcellular location is the cytoplasm. It carries out the reaction D-sedoheptulose 7-phosphate + D-glyceraldehyde 3-phosphate = D-erythrose 4-phosphate + beta-D-fructose 6-phosphate. Its pathway is carbohydrate degradation; pentose phosphate pathway; D-glyceraldehyde 3-phosphate and beta-D-fructose 6-phosphate from D-ribose 5-phosphate and D-xylulose 5-phosphate (non-oxidative stage): step 2/3. Functionally, transaldolase is important for the balance of metabolites in the pentose-phosphate pathway. The protein is Probable transaldolase of Roseobacter denitrificans (strain ATCC 33942 / OCh 114) (Erythrobacter sp. (strain OCh 114)).